Here is a 332-residue protein sequence, read N- to C-terminus: uncharacterized protein (332 aa).

Belongs to the peptidase U32 family.

This is an uncharacterized protein from Methanocaldococcus jannaschii (strain ATCC 43067 / DSM 2661 / JAL-1 / JCM 10045 / NBRC 100440) (Methanococcus jannaschii).